The primary structure comprises 104 residues: L-rhamnose mutarotase (104 aa).

A substrate-binding site is contributed by Tyr18. His22 acts as the Proton donor in catalysis. Substrate is bound by residues Tyr41 and Trp76–Trp77.

This sequence belongs to the rhamnose mutarotase family. In terms of assembly, homodimer.

It is found in the cytoplasm. The enzyme catalyses alpha-L-rhamnose = beta-L-rhamnose. The protein operates within carbohydrate metabolism; L-rhamnose metabolism. Its function is as follows. Involved in the anomeric conversion of L-rhamnose. This Escherichia coli O8 (strain IAI1) protein is L-rhamnose mutarotase.